We begin with the raw amino-acid sequence, 251 residues long: 2,3-bisphosphoglycerate-dependent phosphoglycerate mutase (251 aa).

Substrate is bound by residues 13 to 20, 26 to 27, arginine 65, 92 to 95, lysine 103, 119 to 120, and 186 to 187; these read RHGESEWN, TG, ERHY, RR, and GN. Histidine 14 (tele-phosphohistidine intermediate) is an active-site residue. The Proton donor/acceptor role is filled by glutamate 92.

It belongs to the phosphoglycerate mutase family. BPG-dependent PGAM subfamily.

It catalyses the reaction (2R)-2-phosphoglycerate = (2R)-3-phosphoglycerate. Its pathway is carbohydrate degradation; glycolysis; pyruvate from D-glyceraldehyde 3-phosphate: step 3/5. Catalyzes the interconversion of 2-phosphoglycerate and 3-phosphoglycerate. The sequence is that of 2,3-bisphosphoglycerate-dependent phosphoglycerate mutase from Rhodococcus jostii (strain RHA1).